The sequence spans 422 residues: UDP-N-acetylglucosamine 1-carboxyvinyltransferase (422 aa).

A phosphoenolpyruvate-binding site is contributed by 22–23; it reads KN. Arg-94 lines the UDP-N-acetyl-alpha-D-glucosamine pocket. Catalysis depends on Cys-118, which acts as the Proton donor. At Cys-118 the chain carries 2-(S-cysteinyl)pyruvic acid O-phosphothioketal. UDP-N-acetyl-alpha-D-glucosamine-binding positions include 123-127, Asp-309, and Ile-331; that span reads RPVDL.

This sequence belongs to the EPSP synthase family. MurA subfamily.

Its subcellular location is the cytoplasm. It carries out the reaction phosphoenolpyruvate + UDP-N-acetyl-alpha-D-glucosamine = UDP-N-acetyl-3-O-(1-carboxyvinyl)-alpha-D-glucosamine + phosphate. The protein operates within cell wall biogenesis; peptidoglycan biosynthesis. Functionally, cell wall formation. Adds enolpyruvyl to UDP-N-acetylglucosamine. In Cereibacter sphaeroides (strain ATCC 17023 / DSM 158 / JCM 6121 / CCUG 31486 / LMG 2827 / NBRC 12203 / NCIMB 8253 / ATH 2.4.1.) (Rhodobacter sphaeroides), this protein is UDP-N-acetylglucosamine 1-carboxyvinyltransferase.